The following is a 423-amino-acid chain: Elongation factor 1-alpha (423 aa).

Positions 5 to 211 constitute a tr-type G domain; it reads KEHINLAFIG…DNLEPPEKPT (207 aa). The interval 14–21 is G1; it reads GHVDHGKS. Position 14–21 (14–21) interacts with GTP; it reads GHVDHGKS. Ser21 is a binding site for Mg(2+). The segment at 60–64 is G2; the sequence is GVTID. Residues 81 to 84 are G3; it reads DCPG. Residues 81-85 and 136-139 contribute to the GTP site; these read DCPGH and NKMD. The interval 136 to 139 is G4; it reads NKMD. The segment at 175–177 is G5; sequence SAF.

The protein belongs to the TRAFAC class translation factor GTPase superfamily. Classic translation factor GTPase family. EF-Tu/EF-1A subfamily.

It localises to the cytoplasm. The enzyme catalyses GTP + H2O = GDP + phosphate + H(+). In terms of biological role, GTP hydrolase that promotes the GTP-dependent binding of aminoacyl-tRNA to the A-site of ribosomes during protein biosynthesis. This Methanopyrus kandleri (strain AV19 / DSM 6324 / JCM 9639 / NBRC 100938) protein is Elongation factor 1-alpha.